We begin with the raw amino-acid sequence, 100 residues long: Small ribosomal subunit protein bS21 (100 aa).

A disordered region spans residues 61-100 (KLQREGLLPMKPKPVFGAGPGGDRGRGPAAGAGAGPRGPR). The span at 78 to 100 (AGPGGDRGRGPAAGAGAGPRGPR) shows a compositional bias: gly residues.

It belongs to the bacterial ribosomal protein bS21 family.

The chain is Small ribosomal subunit protein bS21 from Rhodopseudomonas palustris (strain BisB18).